Reading from the N-terminus, the 376-residue chain is Succinyl-diaminopimelate desuccinylase (376 aa).

His-66 is a Zn(2+) binding site. Asp-68 is an active-site residue. Asp-99 is a binding site for Zn(2+). Glu-133 acts as the Proton acceptor in catalysis. Glu-134, Glu-162, and His-348 together coordinate Zn(2+).

The protein belongs to the peptidase M20A family. DapE subfamily. As to quaternary structure, homodimer. It depends on Zn(2+) as a cofactor. Requires Co(2+) as cofactor.

It catalyses the reaction N-succinyl-(2S,6S)-2,6-diaminopimelate + H2O = (2S,6S)-2,6-diaminopimelate + succinate. It participates in amino-acid biosynthesis; L-lysine biosynthesis via DAP pathway; LL-2,6-diaminopimelate from (S)-tetrahydrodipicolinate (succinylase route): step 3/3. Its function is as follows. Catalyzes the hydrolysis of N-succinyl-L,L-diaminopimelic acid (SDAP), forming succinate and LL-2,6-diaminopimelate (DAP), an intermediate involved in the bacterial biosynthesis of lysine and meso-diaminopimelic acid, an essential component of bacterial cell walls. This is Succinyl-diaminopimelate desuccinylase from Thioalkalivibrio sulfidiphilus (strain HL-EbGR7).